Consider the following 450-residue polypeptide: Signal recognition particle protein (450 aa).

GTP is bound by residues 107-114 (GLQGSGKT), 190-194 (DTAGR), and 248-251 (TKTD).

It belongs to the GTP-binding SRP family. SRP54 subfamily. Part of the signal recognition particle protein translocation system, which is composed of SRP and FtsY. SRP is a ribonucleoprotein composed of Ffh and a 4.5S RNA molecule.

The protein resides in the cytoplasm. It carries out the reaction GTP + H2O = GDP + phosphate + H(+). In terms of biological role, involved in targeting and insertion of nascent membrane proteins into the cytoplasmic membrane. Binds to the hydrophobic signal sequence of the ribosome-nascent chain (RNC) as it emerges from the ribosomes. The SRP-RNC complex is then targeted to the cytoplasmic membrane where it interacts with the SRP receptor FtsY. Interaction with FtsY leads to the transfer of the RNC complex to the Sec translocase for insertion into the membrane, the hydrolysis of GTP by both Ffh and FtsY, and the dissociation of the SRP-FtsY complex into the individual components. The chain is Signal recognition particle protein from Buchnera aphidicola subsp. Baizongia pistaciae (strain Bp).